We begin with the raw amino-acid sequence, 316 residues long: Transmembrane protein 231 (316 aa).

A helical membrane pass occupies residues 23-43 (AALFLLLAAALTYIPPLLVAF). Residues asparagine 194, asparagine 199, and asparagine 221 are each glycosylated (N-linked (GlcNAc...) asparagine). Residues 262-282 (FWEMVKFAWVQYVSILLIFLW) form a helical membrane-spanning segment.

Belongs to the TMEM231 family. As to quaternary structure, part of the tectonic-like complex (also named B9 complex). Interacts with TMEM107.

It is found in the cell projection. It localises to the cilium membrane. Functionally, transmembrane component of the tectonic-like complex, a complex localized at the transition zone of primary cilia and acting as a barrier that prevents diffusion of transmembrane proteins between the cilia and plasma membranes. Required for ciliogenesis and sonic hedgehog/SHH signaling. This Homo sapiens (Human) protein is Transmembrane protein 231 (TMEM231).